The primary structure comprises 375 residues: 4,4'-diaponeurosporenoate glycosyltransferase (375 aa).

4 helical membrane passes run 7–23, 112–132, 280–300, and 333–353; these read LLHASTGLSLISGYLMY, ACYLGASYTVSDILIFMDADV, IMMLIILWMVGCITSFSGLAL, and FSILFLAINSILFLVFILVYI.

It belongs to the glycosyltransferase 2 family. CrtQ subfamily.

Its subcellular location is the cell membrane. It participates in carotenoid biosynthesis; staphyloxanthin biosynthesis; staphyloxanthin from farnesyl diphosphate: step 4/5. Its function is as follows. Catalyzes the glycosylation of 4,4'-diaponeurosporenoate, i.e. the esterification of glucose at the C1'' position with the carboxyl group of 4,4'-diaponeurosporenic acid, to form glycosyl-4,4'-diaponeurosporenoate. This is a step in the biosynthesis of staphyloxanthin, an orange pigment present in most staphylococci strains. The chain is 4,4'-diaponeurosporenoate glycosyltransferase (crtQ) from Staphylococcus haemolyticus (strain JCSC1435).